The chain runs to 59 residues: Potassium channel toxin alpha-KTx 4.5 (59 aa).

Positions 1–22 are cleaved as a signal peptide; sequence MKAFYGVLIIFILISMLDLSQQ. 3 disulfides stabilise this stretch: Cys29-Cys50, Cys35-Cys55, and Cys39-Cys57. The tract at residues 48-55 is interaction with Ca(2+)-activated K(+) channels; it reads GKCMNGKC.

In terms of tissue distribution, expressed by the venom gland.

Its subcellular location is the secreted. Inhibits with low potency Kv1.1/KCNA1, Kv1.2/KCNA2, Kv1.3/KCNA3 and Kv11.1/KCNH2/ERG1 voltage-gated potassium channels. The chain is Potassium channel toxin alpha-KTx 4.5 from Tityus costatus (Brazilian scorpion).